The primary structure comprises 419 residues: 3-isopropylmalate dehydratase large subunit (419 aa).

Residues Cys302, Cys362, and Cys365 each contribute to the [4Fe-4S] cluster site.

This sequence belongs to the aconitase/IPM isomerase family. LeuC type 2 subfamily. As to quaternary structure, heterodimer of LeuC and LeuD. Requires [4Fe-4S] cluster as cofactor.

The enzyme catalyses (2R,3S)-3-isopropylmalate = (2S)-2-isopropylmalate. It participates in amino-acid biosynthesis; L-leucine biosynthesis; L-leucine from 3-methyl-2-oxobutanoate: step 2/4. In terms of biological role, catalyzes the isomerization between 2-isopropylmalate and 3-isopropylmalate, via the formation of 2-isopropylmaleate. The sequence is that of 3-isopropylmalate dehydratase large subunit from Sulfurimonas denitrificans (strain ATCC 33889 / DSM 1251) (Thiomicrospira denitrificans (strain ATCC 33889 / DSM 1251)).